We begin with the raw amino-acid sequence, 2561 residues long: Plipastatin synthase subunit A (2561 aa).

Residues 1 to 1038 (MSEHTYSLTH…ATVIREGTDS (1038 aa)) form a domain 1 (glutamate-activating) region. Residues 2–300 (SEHTYSLTHA…SSLPIRITVD (299 aa)) form a condensation 1 region. The segment at 485–888 (TYAELDMYAS…SIEGVREAAV (404 aa)) is adenylation 1. One can recognise a Carrier 1 domain in the interval 961–1036 (APRNVTEMKL…GLATVIREGT (76 aa)). O-(pantetheine 4'-phosphoryl)serine is present on S996. A condensation 2 region spans residues 1048 to 1338 (KQETYPVSSA…NTLALRTRPE (291 aa)). The segment at 1048 to 2554 (KQETYPVSSA…ELTLSALSSI (1507 aa)) is domain 2 (D-ornithine-activating). The adenylation 2 stretch occupies residues 1525–1932 (SYRLLNERAN…QTGLVREAAV (408 aa)). The 75-residue stretch at 2007–2081 (APVNDLQKTM…ELCGHITPLA (75 aa)) folds into the Carrier 2 domain. S2042 carries the post-translational modification O-(pantetheine 4'-phosphoryl)serine. Residues 2089 to 2554 (AEGEAELTPI…ELTLSALSSI (466 aa)) are epimerization.

Belongs to the ATP-dependent AMP-binding enzyme family. Pantetheine 4'-phosphate serves as cofactor.

In terms of biological role, this protein is a multifunctional enzyme, able to activate and polymerize the amino acids Glu and Orn as part of the biosynthesis of the lipopeptide antibiotic lipastatin. The Orn residue is further epimerized to the D-isomer form. The activation sites for these amino acids consist of individual domains. The protein is Plipastatin synthase subunit A (ppsA) of Bacillus subtilis (strain 168).